A 300-amino-acid chain; its full sequence is NAD kinase (300 aa).

The Proton acceptor role is filled by Asp75. Residues 75-76 (DG), 149-150 (ND), Arg177, Asp179, 190-195 (TAYALS), Ala214, and Gln248 each bind NAD(+).

It belongs to the NAD kinase family. It depends on a divalent metal cation as a cofactor.

It is found in the cytoplasm. The catalysed reaction is NAD(+) + ATP = ADP + NADP(+) + H(+). Involved in the regulation of the intracellular balance of NAD and NADP, and is a key enzyme in the biosynthesis of NADP. Catalyzes specifically the phosphorylation on 2'-hydroxyl of the adenosine moiety of NAD to yield NADP. This is NAD kinase from Burkholderia mallei (strain SAVP1).